We begin with the raw amino-acid sequence, 200 residues long: Small ribosomal subunit protein uS4 (200 aa).

An S4 RNA-binding domain is found at 92 to 155 (SRLDAVVYSL…QKLNVIVESV (64 aa)).

The protein belongs to the universal ribosomal protein uS4 family. In terms of assembly, part of the 30S ribosomal subunit. Contacts protein S5. The interaction surface between S4 and S5 is involved in control of translational fidelity.

Its function is as follows. One of the primary rRNA binding proteins, it binds directly to 16S rRNA where it nucleates assembly of the body of the 30S subunit. In terms of biological role, with S5 and S12 plays an important role in translational accuracy. The protein is Small ribosomal subunit protein uS4 of Staphylococcus aureus (strain MRSA252).